Reading from the N-terminus, the 213-residue chain is Bacteriochlorophyll synthase 23 kDa chain (213 aa).

The protein operates within porphyrin-containing compound metabolism; bacteriochlorophyll biosynthesis (light-independent). This Rhodobacter capsulatus (strain ATCC BAA-309 / NBRC 16581 / SB1003) protein is Bacteriochlorophyll synthase 23 kDa chain (bchJ).